Consider the following 174-residue polypeptide: Protein RESISTANCE TO POWDERY MILDEW 8.2 (174 aa).

The RPW8 domain occupies 1-153 (MIAEVAAGGA…IMPQPKFEIH (153 aa)). Residues 7-23 (AGGALGLALSVLHEAVK) form a helical membrane-spanning segment. Residues 68–145 (VNKRLKLLLE…EISTKLDKIM (78 aa)) adopt a coiled-coil conformation.

It belongs to the plant RPW8 protein family.

The protein resides in the membrane. Functionally, disease resistance (R) protein that induces localized, salicylic acid-dependent defenses. Confers resistance to powdery mildew (e.g. Erysiphe cichoracearum UCSC1). In Arabidopsis thaliana (Mouse-ear cress), this protein is Protein RESISTANCE TO POWDERY MILDEW 8.2.